The sequence spans 248 residues: DNA repair protein RecO (248 aa).

This sequence belongs to the RecO family.

Its function is as follows. Involved in DNA repair and RecF pathway recombination. The sequence is that of DNA repair protein RecO from Bacillus cereus (strain B4264).